Reading from the N-terminus, the 316-residue chain is tRNA-splicing endonuclease subunit Sen34 (316 aa).

The interval 120–184 (QAAKKQKLEQ…PGPSNGVTPL (65 aa)) is disordered. 2 stretches are compositionally biased toward polar residues: residues 144–159 (EATQ…QPSA) and 168–181 (LDSS…SNGV). Residues Tyr-253, His-261, and Lys-292 contribute to the active site.

The protein belongs to the tRNA-intron endonuclease family. TRNA splicing endonuclease is a heterotetramer composed of TSEN2, TSEN15, TSEN34/LENG5 and TSEN54. tRNA splicing endonuclease complex also contains proteins of the pre-mRNA 3'-end processing machinery such as CLP1, CPSF1, CPSF4 and CSTF2.

Its subcellular location is the nucleus. It localises to the nucleolus. The enzyme catalyses pretRNA = a 3'-half-tRNA molecule with a 5'-OH end + a 5'-half-tRNA molecule with a 2',3'-cyclic phosphate end + an intron with a 2',3'-cyclic phosphate and a 5'-hydroxyl terminus.. Functionally, constitutes one of the two catalytic subunit of the tRNA-splicing endonuclease complex, a complex responsible for identification and cleavage of the splice sites in pre-tRNA. It cleaves pre-tRNA at the 5'- and 3'-splice sites to release the intron. The products are an intron and two tRNA half-molecules bearing 2',3'-cyclic phosphate and 5'-OH termini. There are no conserved sequences at the splice sites, but the intron is invariably located at the same site in the gene, placing the splice sites an invariant distance from the constant structural features of the tRNA body. The tRNA splicing endonuclease is also involved in mRNA processing via its association with pre-mRNA 3'-end processing factors, establishing a link between pre-tRNA splicing and pre-mRNA 3'-end formation, suggesting that the endonuclease subunits function in multiple RNA-processing events. The sequence is that of tRNA-splicing endonuclease subunit Sen34 (Tsen34) from Mus musculus (Mouse).